Consider the following 88-residue polypeptide: ATP synthase subunit 9, mitochondrial (88 aa).

2 helical membrane passes run 30–50 and 66–86; these read IGLT…ILAV and LGFA…FLIL.

Belongs to the ATPase C chain family. In terms of assembly, F-type ATPases have 2 components, CF(1) - the catalytic core - and CF(0) - the membrane proton channel. CF(1) has five subunits: alpha(3), beta(3), gamma(1), delta(1), epsilon(1). CF(0) has three main subunits: a, b and c.

It is found in the mitochondrion membrane. Its function is as follows. Mitochondrial membrane ATP synthase (F(1)F(0) ATP synthase or Complex V) produces ATP from ADP in the presence of a proton gradient across the membrane which is generated by electron transport complexes of the respiratory chain. F-type ATPases consist of two structural domains, F(1) - containing the extramembraneous catalytic core and F(0) - containing the membrane proton channel, linked together by a central stalk and a peripheral stalk. During catalysis, ATP synthesis in the catalytic domain of F(1) is coupled via a rotary mechanism of the central stalk subunits to proton translocation. Part of the complex F(0) domain. A homomeric c-ring of probably 10 subunits is part of the complex rotary element. The polypeptide is ATP synthase subunit 9, mitochondrial (atp9) (Dictyostelium citrinum (Slime mold)).